The sequence spans 200 residues: Cuticle protein 19.8 (200 aa).

Repeat copies occupy residues 20–23 (AAPA), 26–29 (AAPA), and 43–46 (AAPA). The region spanning 56–127 (HPQYSYGYSV…EPGVHAPIAA (72 aa)) is the Chitin-binding type R&amp;R domain. Residues 70 to 89 (TGDSKSQQESRDGDVVQGSY) are disordered. A run of 5 repeats spans residues 126–129 (AAPV), 144–147 (AAPA), 150–153 (AAPV), 159–162 (AAPA), and 177–180 (AAPA).

Its function is as follows. Component of the cuticle of migratory locust which contains more than 100 different structural proteins. This chain is Cuticle protein 19.8, found in Locusta migratoria (Migratory locust).